The chain runs to 309 residues: Porphobilinogen deaminase (309 aa).

Residue C241 is modified to S-(dipyrrolylmethanemethyl)cysteine.

The protein belongs to the HMBS family. As to quaternary structure, monomer. Requires dipyrromethane as cofactor.

The catalysed reaction is 4 porphobilinogen + H2O = hydroxymethylbilane + 4 NH4(+). The protein operates within porphyrin-containing compound metabolism; protoporphyrin-IX biosynthesis; coproporphyrinogen-III from 5-aminolevulinate: step 2/4. Functionally, tetrapolymerization of the monopyrrole PBG into the hydroxymethylbilane pre-uroporphyrinogen in several discrete steps. This chain is Porphobilinogen deaminase, found in Oceanobacillus iheyensis (strain DSM 14371 / CIP 107618 / JCM 11309 / KCTC 3954 / HTE831).